The following is a 50-amino-acid chain: MFDLSDSVKNAYLQNIFLLLHCSTLHNDCHDICITIKTRYTMIKNKAITI.

This is an uncharacterized protein from Rickettsia prowazekii (strain Madrid E).